The primary structure comprises 517 residues: ATP synthase subunit alpha (517 aa).

174 to 181 lines the ATP pocket; sequence GDRQTGKT.

Belongs to the ATPase alpha/beta chains family. In terms of assembly, F-type ATPases have 2 components, CF(1) - the catalytic core - and CF(0) - the membrane proton channel. CF(1) has five subunits: alpha(3), beta(3), gamma(1), delta(1), epsilon(1). CF(0) has three main subunits: a(1), b(2) and c(9-12). The alpha and beta chains form an alternating ring which encloses part of the gamma chain. CF(1) is attached to CF(0) by a central stalk formed by the gamma and epsilon chains, while a peripheral stalk is formed by the delta and b chains.

The protein resides in the cell inner membrane. The catalysed reaction is ATP + H2O + 4 H(+)(in) = ADP + phosphate + 5 H(+)(out). In terms of biological role, produces ATP from ADP in the presence of a proton gradient across the membrane. The alpha chain is a regulatory subunit. The sequence is that of ATP synthase subunit alpha from Delftia acidovorans (strain DSM 14801 / SPH-1).